Here is a 368-residue protein sequence, read N- to C-terminus: Chaperone protein DnaJ (368 aa).

Positions 5-70 (DYYEVLGVSK…EKRSMYDRMG (66 aa)) constitute a J domain. A CR-type zinc finger spans residues 132 to 210 (GVKKTITFTA…CHGSGVADRQ (79 aa)). 8 residues coordinate Zn(2+): C145, C148, C162, C165, C184, C187, C198, and C201. 4 CXXCXGXG motif repeats span residues 145–152 (CEVCDGKG), 162–169 (CRTCHGTG), 184–191 (CGTCRGQG), and 198–205 (CQSCHGSG). A disordered region spans residues 349 to 368 (DGDEHSSSPKKKSFFDRLFD). Residues 350 to 368 (GDEHSSSPKKKSFFDRLFD) are compositionally biased toward basic and acidic residues.

The protein belongs to the DnaJ family. Homodimer. It depends on Zn(2+) as a cofactor.

Its subcellular location is the cytoplasm. Participates actively in the response to hyperosmotic and heat shock by preventing the aggregation of stress-denatured proteins and by disaggregating proteins, also in an autonomous, DnaK-independent fashion. Unfolded proteins bind initially to DnaJ; upon interaction with the DnaJ-bound protein, DnaK hydrolyzes its bound ATP, resulting in the formation of a stable complex. GrpE releases ADP from DnaK; ATP binding to DnaK triggers the release of the substrate protein, thus completing the reaction cycle. Several rounds of ATP-dependent interactions between DnaJ, DnaK and GrpE are required for fully efficient folding. Also involved, together with DnaK and GrpE, in the DNA replication of plasmids through activation of initiation proteins. This Acinetobacter baylyi (strain ATCC 33305 / BD413 / ADP1) protein is Chaperone protein DnaJ.